Here is a 266-residue protein sequence, read N- to C-terminus: Non-structural maintenance of chromosomes element 1 homolog (266 aa).

The segment at 1-102 (MQGSTRRAGA…SVSKMATDFA (102 aa)) is interaction with NSMCE3. An RING-type; atypical zinc finger spans residues 191–232 (CNICHSLLIQGQSCETCGIRMHLPCVAKYFQSTAEPRCPHCN). The tract at residues 246–266 (EKEREAGISKSSRKSLRTRQH) is disordered. Over residues 256 to 266 (SSRKSLRTRQH) the composition is skewed to basic residues.

It belongs to the NSE1 family. Component of the SMC5-SMC6 complex which consists at least of SMC5, SMC6, NSMCE2, NSMCE1, NSMCE4A or EID3 and NSMCE3. NSMCE1, NSMCE4A or EID3 and NSMCE3 probably form a subcomplex that bridges the head domains of the SMC5-SMC6 heterodimer. Interacts with NSMCE3. Post-translationally, ubiquitinated.

It is found in the nucleus. The protein resides in the chromosome. It localises to the telomere. It catalyses the reaction S-ubiquitinyl-[E2 ubiquitin-conjugating enzyme]-L-cysteine + [acceptor protein]-L-lysine = [E2 ubiquitin-conjugating enzyme]-L-cysteine + N(6)-ubiquitinyl-[acceptor protein]-L-lysine.. Its function is as follows. RING-type zinc finger-containing E3 ubiquitin ligase that assembles with melanoma antigen protein (MAGE) to catalyze the direct transfer of ubiquitin from E2 ubiquitin-conjugating enzyme to a specific substrate. Within MAGE-RING ubiquitin ligase complex, MAGE stimulates and specifies ubiquitin ligase activity likely through recruitment and/or stabilization of the E2 ubiquitin-conjugating enzyme at the E3:substrate complex. Involved in maintenance of genome integrity, DNA damage response and DNA repair. NSMCE3/MAGEG1 and NSMCE1 ubiquitin ligase are components of SMC5-SMC6 complex and may positively regulate homologous recombination-mediated DNA repair. The chain is Non-structural maintenance of chromosomes element 1 homolog (Nsmce1) from Rattus norvegicus (Rat).